Consider the following 454-residue polypeptide: V-type ATP synthase subunit I 2 (454 aa).

The tract at residues E101–A121 is disordered. A run of 4 helical transmembrane segments spans residues L254 to L274, V293 to A313, M351 to I371, and A424 to V444.

This sequence belongs to the V-ATPase 116 kDa subunit family.

The protein localises to the cell membrane. Functionally, produces ATP from ADP in the presence of a proton gradient across the membrane. The polypeptide is V-type ATP synthase subunit I 2 (atpI2) (Treponema pallidum (strain Nichols)).